Reading from the N-terminus, the 413-residue chain is Chloramphenicol efflux pump MT0201 (413 aa).

12 consecutive transmembrane segments (helical) span residues 23–43 (LSVLACAAFIYVTAEILPVGA), 55–75 (VVLVGTLLSWYALVAAVTTVP), 89–109 (LVVSLVCLTVSQLVSALAPNF), 110–130 (AVLAAGRVLCAVTHGLLWAVI), 150–170 (IYIGTSLALVVGSPLTAAMSL), 176–196 (LAAVCVTGAAAAVALAARLAL), 226–246 (VLTMIAVTGHFVSYTYIVVII), 256–276 (NLAWLLAAYGVAGLVSVPLVA), 286–306 (AVIVGMTGLTAAFTLLTALAF), 312–332 (AATALLGTGAIVLWGALATAV), 353–373 (GLYVTAFQIGIMAGALLGGLL), and 378–398 (LAMMLTASAGLMGVALFGMTV).

This sequence belongs to the major facilitator superfamily.

The protein resides in the cell membrane. Its function is as follows. Active efflux pump that plays an important role in chloramphenicol resistance. This chain is Chloramphenicol efflux pump MT0201, found in Mycobacterium tuberculosis (strain CDC 1551 / Oshkosh).